Consider the following 406-residue polypeptide: Argininosuccinate synthase (406 aa).

ATP is bound by residues alanine 13–serine 21 and alanine 40. Positions 91 and 96 each coordinate L-citrulline. Position 121 (glycine 121) interacts with ATP. L-aspartate contacts are provided by threonine 123, asparagine 127, and aspartate 128. Residue asparagine 127 participates in L-citrulline binding. L-citrulline-binding residues include arginine 131, serine 180, serine 189, glutamate 265, and tyrosine 277.

This sequence belongs to the argininosuccinate synthase family. Type 1 subfamily. In terms of assembly, homotetramer.

It localises to the cytoplasm. The catalysed reaction is L-citrulline + L-aspartate + ATP = 2-(N(omega)-L-arginino)succinate + AMP + diphosphate + H(+). It functions in the pathway amino-acid biosynthesis; L-arginine biosynthesis; L-arginine from L-ornithine and carbamoyl phosphate: step 2/3. The sequence is that of Argininosuccinate synthase from Syntrophotalea carbinolica (strain DSM 2380 / NBRC 103641 / GraBd1) (Pelobacter carbinolicus).